Reading from the N-terminus, the 165-residue chain is Transcription antitermination protein NusB (165 aa).

Positions 1–27 (MISDDTDQFNPRDAKSPEAAKGKSAKR) are disordered. Basic and acidic residues predominate over residues 10 to 21 (NPRDAKSPEAAK).

Belongs to the NusB family.

Its function is as follows. Involved in transcription antitermination. Required for transcription of ribosomal RNA (rRNA) genes. Binds specifically to the boxA antiterminator sequence of the ribosomal RNA (rrn) operons. This is Transcription antitermination protein NusB from Pseudomonas savastanoi pv. phaseolicola (strain 1448A / Race 6) (Pseudomonas syringae pv. phaseolicola (strain 1448A / Race 6)).